Consider the following 174-residue polypeptide: Gamma-crystallin C (174 aa).

2 consecutive Beta/gamma crystallin 'Greek key' domains span residues 2-40 (GKIT…RVDS) and 41-83 (GCWM…CLIS). Cys23 bears the S-methylcysteine mark. The interval 84–87 (DTSS) is connecting peptide. Beta/gamma crystallin 'Greek key' domains lie at 88 to 128 (HRLR…HVLE) and 129 to 171 (GCWV…RRVV).

The protein belongs to the beta/gamma-crystallin family.

Its function is as follows. Crystallins are the dominant structural components of the vertebrate eye lens. The polypeptide is Gamma-crystallin C (CRYGC) (Bos taurus (Bovine)).